The chain runs to 647 residues: Exoribonuclease 2 (647 aa).

The region spanning 191–517 (REDLCALPFV…VNHRLLKALI (327 aa)) is the RNB domain. The S1 motif domain occupies 563-645 (PTPFNAEIID…DTRSLIARPF (83 aa)).

This sequence belongs to the RNR ribonuclease family. RNase II subfamily.

Its subcellular location is the cytoplasm. The enzyme catalyses Exonucleolytic cleavage in the 3'- to 5'-direction to yield nucleoside 5'-phosphates.. In terms of biological role, involved in mRNA degradation. Hydrolyzes single-stranded polyribonucleotides processively in the 3' to 5' direction. In Edwardsiella piscicida, this protein is Exoribonuclease 2.